We begin with the raw amino-acid sequence, 431 residues long: Putative serine/threonine-protein kinase A (431 aa).

The Protein kinase domain maps to 20-279 (YLNKGIVGLG…VREIFQIPYI (260 aa)). Residues 26-34 (VGLGSYGEA) and Lys-49 contribute to the ATP site. Asp-147 (proton acceptor) is an active-site residue. In terms of domain architecture, PH spans 331–429 (DVTHRGHVNK…WVHAIQRGIG (99 aa)).

Belongs to the protein kinase superfamily. Ser/Thr protein kinase family.

It catalyses the reaction L-seryl-[protein] + ATP = O-phospho-L-seryl-[protein] + ADP + H(+). The catalysed reaction is L-threonyl-[protein] + ATP = O-phospho-L-threonyl-[protein] + ADP + H(+). In Trypanosoma brucei brucei, this protein is Putative serine/threonine-protein kinase A (NRKA).